Reading from the N-terminus, the 221-residue chain is Probable septum site-determining protein MinC (221 aa).

Belongs to the MinC family. Interacts with MinD and FtsZ.

Its function is as follows. Cell division inhibitor that blocks the formation of polar Z ring septums. Rapidly oscillates between the poles of the cell to destabilize FtsZ filaments that have formed before they mature into polar Z rings. Prevents FtsZ polymerization. This is Probable septum site-determining protein MinC from Aliivibrio fischeri (strain ATCC 700601 / ES114) (Vibrio fischeri).